The sequence spans 243 residues: MLIIPAIDLKDGKCVRLKQGRMEDDTVFSDDLVATAQHWVNEGARRLHLVDLNGAFAGTPIHKPVVEAIAKAQPELPIQIGGGIRSLETIEHYLEAGVTFVIIGTKAVQEPEFVEEACKSFAGHIIVGIDAMNGMVATDGWANVTDVKATDLAKRFADAGVSSIVYTDIARDGMMQGVNVEQTVNLAQYSGLPVIASGGVTNLDDVRNLKGQLGILGAITGRAIYEGTLNLREAQLLLDENRL.

The Proton acceptor role is filled by Asp-8. Residue Asp-130 is the Proton donor of the active site.

It belongs to the HisA/HisF family.

It localises to the cytoplasm. It carries out the reaction 1-(5-phospho-beta-D-ribosyl)-5-[(5-phospho-beta-D-ribosylamino)methylideneamino]imidazole-4-carboxamide = 5-[(5-phospho-1-deoxy-D-ribulos-1-ylimino)methylamino]-1-(5-phospho-beta-D-ribosyl)imidazole-4-carboxamide. The protein operates within amino-acid biosynthesis; L-histidine biosynthesis; L-histidine from 5-phospho-alpha-D-ribose 1-diphosphate: step 4/9. This chain is 1-(5-phosphoribosyl)-5-[(5-phosphoribosylamino)methylideneamino] imidazole-4-carboxamide isomerase, found in Acinetobacter baumannii (strain SDF).